Reading from the N-terminus, the 269-residue chain is Energy-coupling factor transporter ATP-binding protein EcfA1 (269 aa).

Residues 8 to 242 (ITFNHVRFKY…GDGLTEIGLD (235 aa)) enclose the ABC transporter domain. 42 to 49 (GHNGSGKS) contributes to the ATP binding site.

Belongs to the ABC transporter superfamily. Energy-coupling factor EcfA family. In terms of assembly, forms a stable energy-coupling factor (ECF) transporter complex composed of 2 membrane-embedded substrate-binding proteins (S component), 2 ATP-binding proteins (A component) and 2 transmembrane proteins (T component).

Its subcellular location is the cell membrane. ATP-binding (A) component of a common energy-coupling factor (ECF) ABC-transporter complex. Unlike classic ABC transporters this ECF transporter provides the energy necessary to transport a number of different substrates. The sequence is that of Energy-coupling factor transporter ATP-binding protein EcfA1 from Staphylococcus saprophyticus subsp. saprophyticus (strain ATCC 15305 / DSM 20229 / NCIMB 8711 / NCTC 7292 / S-41).